The primary structure comprises 310 residues: Transcriptional regulator NRG1 (310 aa).

The disordered stretch occupies residues 85-131 (YYMGPPAQHRLPTPPPYPMSSPTTATAATPLSQQSPHLQPQQTLQQP). The span at 104 to 131 (SSPTTATAATPLSQQSPHLQPQQTLQQP) shows a compositional bias: low complexity. 2 consecutive C2H2-type zinc fingers follow at residues 228 to 250 (HVCK…NRIH) and 256 to 280 (HQCP…YKTH).

It is found in the nucleus. Its function is as follows. Transcriptional repressor that binds NRG1 response elements (NRE) of target promoters. Involved in regulation of chlamydospore formation, hyphal growth, virulence, and stress response. Plays a key role in regulating true hyphal growth, but does not regulate pseudohyphal growth in the same fashion. Directs transcriptional repression of a subset of filament-specific genes such as HWP1, HYR1, ALS8, HWP1, or ECE1; via the TUP1 pathway. Functions with UME6 in a negative feedback loop to control the level and duration of filament-specific gene expression in response to inducing conditions. Plays a key role in biofilm formation and dispersion. Also plays the role of a negative regulator of virulence in mice models. Required for the expression of the cell wall genes RBR1. This Candida albicans (strain SC5314 / ATCC MYA-2876) (Yeast) protein is Transcriptional regulator NRG1 (NRG1).